The chain runs to 202 residues: Small ribosomal subunit protein uS4c (202 aa).

The S4 RNA-binding domain occupies 90-153 (MRLDNIIFRL…KSQAIISKNL (64 aa)).

The protein belongs to the universal ribosomal protein uS4 family. As to quaternary structure, part of the 30S ribosomal subunit. Contacts protein S5. The interaction surface between S4 and S5 is involved in control of translational fidelity.

It is found in the plastid. It localises to the chloroplast. One of the primary rRNA binding proteins, it binds directly to 16S rRNA where it nucleates assembly of the body of the 30S subunit. In terms of biological role, with S5 and S12 plays an important role in translational accuracy. This chain is Small ribosomal subunit protein uS4c (rps4), found in Rosulabryum capillare (Capillary thread-moss).